A 179-amino-acid chain; its full sequence is Cytochrome b6-f complex iron-sulfur subunit (179 aa).

A helical transmembrane segment spans residues 21–43 (LLTFGTVTGVALGALYPVVNYFI). The 102-residue stretch at 61 to 162 (GNDIIVSEFL…ANVSDDKLVF (102 aa)) folds into the Rieske domain. [2Fe-2S] cluster is bound by residues C108, H110, C126, and H129. A disulfide bridge links C113 with C128.

Belongs to the Rieske iron-sulfur protein family. In terms of assembly, the 4 large subunits of the cytochrome b6-f complex are cytochrome b6, subunit IV (17 kDa polypeptide, PetD), cytochrome f and the Rieske protein, while the 4 small subunits are PetG, PetL, PetM and PetN. The complex functions as a dimer. Requires [2Fe-2S] cluster as cofactor.

It is found in the cellular thylakoid membrane. The catalysed reaction is 2 oxidized [plastocyanin] + a plastoquinol + 2 H(+)(in) = 2 reduced [plastocyanin] + a plastoquinone + 4 H(+)(out). In terms of biological role, component of the cytochrome b6-f complex, which mediates electron transfer between photosystem II (PSII) and photosystem I (PSI), cyclic electron flow around PSI, and state transitions. The polypeptide is Cytochrome b6-f complex iron-sulfur subunit (Trichodesmium erythraeum (strain IMS101)).